Reading from the N-terminus, the 360-residue chain is Putative agmatine deiminase (360 aa).

The active-site Amidino-cysteine intermediate is the C353.

The protein belongs to the agmatine deiminase family.

The enzyme catalyses agmatine + H2O = N-carbamoylputrescine + NH4(+). The protein is Putative agmatine deiminase of Vibrio parahaemolyticus serotype O3:K6 (strain RIMD 2210633).